Reading from the N-terminus, the 141-residue chain is ATP synthase epsilon chain (141 aa).

The protein belongs to the ATPase epsilon chain family. As to quaternary structure, F-type ATPases have 2 components, CF(1) - the catalytic core - and CF(0) - the membrane proton channel. CF(1) has five subunits: alpha(3), beta(3), gamma(1), delta(1), epsilon(1). CF(0) has three main subunits: a, b and c.

The protein localises to the cell inner membrane. Produces ATP from ADP in the presence of a proton gradient across the membrane. This Pseudomonas savastanoi pv. phaseolicola (strain 1448A / Race 6) (Pseudomonas syringae pv. phaseolicola (strain 1448A / Race 6)) protein is ATP synthase epsilon chain.